We begin with the raw amino-acid sequence, 86 residues long: Small ribosomal subunit protein uS15 (86 aa).

Residues 1 to 22 (MSVDTQKVIEDNKRSAQDTGSP) form a disordered region. The segment covering 7-16 (KVIEDNKRSA) has biased composition (basic and acidic residues).

The protein belongs to the universal ribosomal protein uS15 family. As to quaternary structure, part of the 30S ribosomal subunit. Forms a bridge to the 50S subunit in the 70S ribosome, contacting the 23S rRNA.

Its function is as follows. One of the primary rRNA binding proteins, it binds directly to 16S rRNA where it helps nucleate assembly of the platform of the 30S subunit by binding and bridging several RNA helices of the 16S rRNA. In terms of biological role, forms an intersubunit bridge (bridge B4) with the 23S rRNA of the 50S subunit in the ribosome. This is Small ribosomal subunit protein uS15 from Xanthomonas campestris pv. campestris (strain 8004).